A 250-amino-acid chain; its full sequence is 7-cyano-7-deazaguanine synthase (250 aa).

Position 28–38 (28–38) interacts with ATP; sequence LSGGLDSATCV. Zn(2+)-binding residues include cysteine 213, cysteine 226, cysteine 229, and cysteine 232.

It belongs to the QueC family. Zn(2+) serves as cofactor.

It catalyses the reaction 7-carboxy-7-deazaguanine + NH4(+) + ATP = 7-cyano-7-deazaguanine + ADP + phosphate + H2O + H(+). It functions in the pathway purine metabolism; 7-cyano-7-deazaguanine biosynthesis. Functionally, catalyzes the ATP-dependent conversion of 7-carboxy-7-deazaguanine (CDG) to 7-cyano-7-deazaguanine (preQ(0)). The chain is 7-cyano-7-deazaguanine synthase from Rhodopirellula baltica (strain DSM 10527 / NCIMB 13988 / SH1).